A 596-amino-acid polypeptide reads, in one-letter code: Fructan 1-exohydrolase w2 (596 aa).

A signal peptide spans 1–20; it reads MAQAWAFLLPVLVLGSYVTS. The active site involves Asp-75. Residues Asn-168, Asn-236, and Asn-248 are each glycosylated (N-linked (GlcNAc...) asparagine). The cysteines at positions 446 and 492 are disulfide-linked. N-linked (GlcNAc...) asparagine glycosylation occurs at Asn-567.

The protein belongs to the glycosyl hydrolase 32 family.

It carries out the reaction Hydrolysis of terminal, non-reducing (2-&gt;1)-linked beta-D-fructofuranose residues in fructans.. With respect to regulation, inhibited by sucrose. Hydrolyzes inulin-type beta-(2,1)-fructans, but not beta-(2,1)-linkages in branched fructans. Has low activity against beta-(2,6)-linked fructans. May play a role as a beta-(2,1)-trimmer during graminan biosynthesis. This chain is Fructan 1-exohydrolase w2, found in Triticum aestivum (Wheat).